Here is a 59-residue protein sequence, read N- to C-terminus: Large ribosomal subunit protein uL30 (59 aa).

This sequence belongs to the universal ribosomal protein uL30 family. In terms of assembly, part of the 50S ribosomal subunit.

This Listeria welshimeri serovar 6b (strain ATCC 35897 / DSM 20650 / CCUG 15529 / CIP 8149 / NCTC 11857 / SLCC 5334 / V8) protein is Large ribosomal subunit protein uL30.